Reading from the N-terminus, the 62-residue chain is UPF0434 protein Fphi_1862 (62 aa).

This sequence belongs to the UPF0434 family.

This Francisella philomiragia subsp. philomiragia (strain ATCC 25017 / CCUG 19701 / FSC 153 / O#319-036) protein is UPF0434 protein Fphi_1862.